The chain runs to 132 residues: Small ribosomal subunit protein uS8 (132 aa).

It belongs to the universal ribosomal protein uS8 family. As to quaternary structure, part of the 30S ribosomal subunit. Contacts proteins S5 and S12.

Functionally, one of the primary rRNA binding proteins, it binds directly to 16S rRNA central domain where it helps coordinate assembly of the platform of the 30S subunit. The polypeptide is Small ribosomal subunit protein uS8 (Borrelia garinii subsp. bavariensis (strain ATCC BAA-2496 / DSM 23469 / PBi) (Borreliella bavariensis)).